The sequence spans 344 residues: Lipase chaperone (344 aa).

The helical transmembrane segment at 14-34 threads the bilayer; it reads AAIYGGVGLAAVAGVAMWSGA.

This sequence belongs to the lipase chaperone family.

The protein resides in the cell inner membrane. In terms of biological role, may be involved in the folding of the extracellular lipase during its passage through the periplasm. In Burkholderia cenocepacia (strain ATCC BAA-245 / DSM 16553 / LMG 16656 / NCTC 13227 / J2315 / CF5610) (Burkholderia cepacia (strain J2315)), this protein is Lipase chaperone.